The following is a 424-amino-acid chain: Putative chloroquine resistance transporter (424 aa).

Residues Met-1–Asn-56 are Cytoplasmic-facing. A helical transmembrane segment spans residues Ile-57 to Ser-77. The Vacuolar segment spans residues Lys-78 to Ser-88. Residue Asn-86 is glycosylated (N-linked (GlcNAc...) asparagine). A helical transmembrane segment spans residues Phe-89–Ile-109. Over Tyr-110–Asn-125 the chain is Cytoplasmic. A helical transmembrane segment spans residues Phe-126 to Ile-146. At Gly-147–Gln-156 the chain is on the vacuolar side. A helical membrane pass occupies residues Ser-157–Tyr-177. Residues Arg-178 to His-180 are Cytoplasmic-facing. Residues Leu-181–Leu-201 form a helical membrane-spanning segment. The Vacuolar portion of the chain corresponds to Ser-202–Asn-209. A helical transmembrane segment spans residues Ser-210 to Thr-230. Residues Arg-231–Met-248 lie on the Cytoplasmic side of the membrane. A helical transmembrane segment spans residues Val-249–Leu-269. Over Lys-270 to Lys-317 the chain is Vacuolar. Disulfide bonds link Cys-289–Cys-312 and Cys-301–Cys-309. Residues Thr-318–Asp-338 traverse the membrane as a helical segment. The Cytoplasmic portion of the chain corresponds to Lys-339 to Thr-346. A helical transmembrane segment spans residues Ile-347–Gly-367. Residues Asp-368 to Asp-377 lie on the Vacuolar side of the membrane. A helical transmembrane segment spans residues Phe-378 to Leu-398. At Glu-399–Ala-424 the chain is on the cytoplasmic side.

This sequence belongs to the CRT-like transporter family.

The protein localises to the vacuole membrane. Nutrient transporter. Involved in maintaining the osmotic homeostasis of the digestive vacuole. The protein is Putative chloroquine resistance transporter of Plasmodium chabaudi.